The sequence spans 307 residues: Aspartate carbamoyltransferase catalytic subunit (307 aa).

2 residues coordinate carbamoyl phosphate: arginine 56 and threonine 57. Lysine 84 contributes to the L-aspartate binding site. Residues arginine 106, histidine 136, and glutamine 139 each coordinate carbamoyl phosphate. The L-aspartate site is built by arginine 169 and arginine 221. Alanine 262 and proline 263 together coordinate carbamoyl phosphate.

The protein belongs to the aspartate/ornithine carbamoyltransferase superfamily. ATCase family. As to quaternary structure, heterododecamer (2C3:3R2) of six catalytic PyrB chains organized as two trimers (C3), and six regulatory PyrI chains organized as three dimers (R2).

The enzyme catalyses carbamoyl phosphate + L-aspartate = N-carbamoyl-L-aspartate + phosphate + H(+). It participates in pyrimidine metabolism; UMP biosynthesis via de novo pathway; (S)-dihydroorotate from bicarbonate: step 2/3. In terms of biological role, catalyzes the condensation of carbamoyl phosphate and aspartate to form carbamoyl aspartate and inorganic phosphate, the committed step in the de novo pyrimidine nucleotide biosynthesis pathway. This is Aspartate carbamoyltransferase catalytic subunit from Streptococcus pneumoniae (strain P1031).